We begin with the raw amino-acid sequence, 557 residues long: T-complex protein 1 subunit eta (557 aa).

At alanine 2 the chain carries N-acetylalanine. A disordered region spans residues 529 to 557; the sequence is PKSESAQGDAAGAMGRGRGGGRGRGMRRR. A compositionally biased stretch (basic residues) spans 547–557; the sequence is GGGRGRGMRRR.

The protein belongs to the TCP-1 chaperonin family. Heterooligomeric complex of about 850 to 900 kDa that forms two stacked rings, 12 to 16 nm in diameter. Interacts with KNAT1.

It localises to the cytoplasm. Its function is as follows. Molecular chaperone; assists the folding of proteins upon ATP hydrolysis. Known to play a role, in vitro, in the folding of actin and tubulin. The chain is T-complex protein 1 subunit eta from Arabidopsis thaliana (Mouse-ear cress).